The following is a 526-amino-acid chain: Putative NipSnap protein K02D10.1 (526 aa).

It belongs to the NipSnap family.

The polypeptide is Putative NipSnap protein K02D10.1 (Caenorhabditis elegans).